Consider the following 617-residue polypeptide: Electron transfer flavoprotein-ubiquinone oxidoreductase, mitochondrial (617 aa).

The N-terminal 33 residues, M1–W33, are a transit peptide targeting the mitochondrion. G75–G80 is an FAD binding site. K96 carries the N6-acetyllysine modification. An intramembrane segment occupies I109–D130. 2 positions are modified to N6-acetyllysine: K132 and K223. Positions 305 and 306 each coordinate a ubiquinone. Position 357 is an N6-acetyllysine (K357). The stretch at I428–E447 is an intramembrane region. S551 bears the Phosphoserine mark. Residues C561, C586, C589, and C592 each coordinate [4Fe-4S] cluster. Positions F577–P606 constitute a 4Fe-4S ferredoxin-type domain.

As to quaternary structure, monomer. It depends on [4Fe-4S] cluster as a cofactor. Requires FAD as cofactor.

Its subcellular location is the mitochondrion inner membrane. The catalysed reaction is a ubiquinone + reduced [electron-transfer flavoprotein] = a ubiquinol + oxidized [electron-transfer flavoprotein] + H(+). Its function is as follows. Accepts electrons from ETF and reduces ubiquinone. This Sus scrofa (Pig) protein is Electron transfer flavoprotein-ubiquinone oxidoreductase, mitochondrial (ETFDH).